Consider the following 81-residue polypeptide: Tissue- and phase-specific nuclear protein (81 aa).

Expressed in oviduct, where expression levels are higher in uterine sections than in tuba sections. No expression detected in small intestine and liver (at protein level).

Its subcellular location is the nucleus. The sequence is that of Tissue- and phase-specific nuclear protein from Podarcis siculus (Italian wall lizard).